Here is an 853-residue protein sequence, read N- to C-terminus: Thrombospondin type-1 domain-containing protein 1 (853 aa).

The first 24 residues, 1–24 (MKPMLKDFSNLLLVVLCDYVLGEA), serve as a signal peptide directing secretion. The Extracellular segment spans residues 25-414 (EYLLLREPGH…QPQGPVKSNN (390 aa)). N-linked (GlcNAc...) asparagine glycans are attached at residues N39, N53, N58, N69, N80, N135, and N304. In terms of domain architecture, TSP type-1 spans 341–394 (IETWGLWQPWSQCSATCGDGVRERRRVCLTSFPSRPGCPGMSLEASLCSLEECA). Cystine bridges form between C353/C388, C357/C393, and C368/C378. Residues 415 to 435 (IVTVTGISLCLFIIIATVLIT) form a helical membrane-spanning segment. Residues 436 to 853 (LWRRFGRPAK…STLSVEKLVI (418 aa)) lie on the Cytoplasmic side of the membrane. Disordered stretches follow at residues 445–518 (KCST…ESFQ), 624–650 (TLIRKSQARHVGSRGGPSERSHARNAH), 668–702 (ERSMSTLTPRQAPAYSTRTRTCEQAEDRFRPQSRG), and 714–800 (QEAS…RKDK). S464 bears the Phosphoserine mark. A compositionally biased stretch (polar residues) spans 671–686 (MSTLTPRQAPAYSTRT). Basic and acidic residues predominate over residues 687 to 697 (RTCEQAEDRFR). Positions 767–795 (SHKSVSRKQSSPTSPKDSYQRVSPLSPSQ) are enriched in polar residues.

Part of a complex composed of THSD1, PTK2/FAK1, TLN1 and VCL. Interacts with TLN1.

It is found in the endosome membrane. It localises to the cell junction. The protein resides in the focal adhesion. Functionally, is a positive regulator of nascent focal adhesion assembly, involved in the modulation of endothelial cell attachment to the extracellular matrix. The chain is Thrombospondin type-1 domain-containing protein 1 (THSD1) from Pongo abelii (Sumatran orangutan).